Reading from the N-terminus, the 185-residue chain is Elongation factor P (185 aa).

The protein belongs to the elongation factor P family.

The protein resides in the cytoplasm. It participates in protein biosynthesis; polypeptide chain elongation. Its function is as follows. Involved in peptide bond synthesis. Stimulates efficient translation and peptide-bond synthesis on native or reconstituted 70S ribosomes in vitro. Probably functions indirectly by altering the affinity of the ribosome for aminoacyl-tRNA, thus increasing their reactivity as acceptors for peptidyl transferase. The sequence is that of Elongation factor P from Bacillus anthracis (strain CDC 684 / NRRL 3495).